A 206-amino-acid chain; its full sequence is Small ribosomal subunit protein uS2 (206 aa).

This sequence belongs to the universal ribosomal protein uS2 family.

This is Small ribosomal subunit protein uS2 from Pyrobaculum neutrophilum (strain DSM 2338 / JCM 9278 / NBRC 100436 / V24Sta) (Thermoproteus neutrophilus).